Consider the following 428-residue polypeptide: Probable pectin lyase F (428 aa).

Residues Met1–Ala20 form the signal peptide. Cys83 and Cys107 are disulfide-bonded. Residue Arg257 is part of the active site. An N-linked (GlcNAc...) asparagine glycan is attached at Asn276. Cys324 and Cys332 are joined by a disulfide. The tract at residues Gly383–Tyr428 is disordered. The span at Ala389–Tyr417 shows a compositional bias: low complexity. A compositionally biased stretch (basic residues) spans Ala418–Tyr428.

This sequence belongs to the polysaccharide lyase 1 family.

It localises to the secreted. It catalyses the reaction Eliminative cleavage of (1-&gt;4)-alpha-D-galacturonan methyl ester to give oligosaccharides with 4-deoxy-6-O-methyl-alpha-D-galact-4-enuronosyl groups at their non-reducing ends.. In terms of biological role, pectinolytic enzymes consist of four classes of enzymes: pectin lyase, polygalacturonase, pectin methylesterase and rhamnogalacturonase. Among pectinolytic enzymes, pectin lyase is the most important in depolymerization of pectin, since it cleaves internal glycosidic bonds of highly methylated pectins. The polypeptide is Probable pectin lyase F (pelF) (Aspergillus oryzae (strain ATCC 42149 / RIB 40) (Yellow koji mold)).